We begin with the raw amino-acid sequence, 241 residues long: Ribonuclease 3 (241 aa).

The RNase III domain occupies 8 to 137; it reads LTLLKNRLGI…LLGAVYLDQG (130 aa). Residue Glu-50 coordinates Mg(2+). The active site involves Asp-54. 2 residues coordinate Mg(2+): Asp-123 and Glu-126. Residue Glu-126 is part of the active site. The region spanning 164–233 is the DRBM domain; the sequence is DYKTELQELV…AKKALMKSDL (70 aa). Residues 214–241 form a disordered region; the sequence is RSKKEAEQQAAKKALMKSDLGSACNHKK.

This sequence belongs to the ribonuclease III family. Homodimer. Requires Mg(2+) as cofactor.

It is found in the cytoplasm. The catalysed reaction is Endonucleolytic cleavage to 5'-phosphomonoester.. Its function is as follows. Digests double-stranded RNA. Involved in the processing of primary rRNA transcript to yield the immediate precursors to the large and small rRNAs (23S and 16S). Processes some mRNAs, and tRNAs when they are encoded in the rRNA operon. Processes pre-crRNA and tracrRNA of type II CRISPR loci if present in the organism. The chain is Ribonuclease 3 from Pelotomaculum thermopropionicum (strain DSM 13744 / JCM 10971 / SI).